Here is a 384-residue protein sequence, read N- to C-terminus: Iron(3+)-hydroxamate import system permease protein FhuB (384 aa).

Transmembrane regions (helical) follow at residues 58–78 (GAVIVLIAGLCLLCLGAFLSI), 115–135 (TAAAALVGALLAVSGAIMQGM), 154–174 (FAVSIAFAFFPGLSAMGLVLW), 176–196 (FAGAGLGASTVMGIGMFSRGG), 202–222 (LALAGTAVTYFFTGISTAIAI), 243–263 (WSGVQLLLIAGAVGLTLAFFI), 296–316 (VILTGAAVSIAGTIAFIGLII), 330–350 (WIIPCSAVLGAVLLVFADIAA), and 357–377 (FETPVGALTSLIGVPFFFYLA).

The protein belongs to the binding-protein-dependent transport system permease family. FecCD subfamily. The complex is composed of an ATP-binding protein (FhuC), two transmembrane proteins (FhuB and FhuG) and a solute-binding protein (FhuD or YxeB).

The protein localises to the cell membrane. It is found in the membrane raft. Functionally, part of the ABC transporter complex FhuBGCD involved in iron(3+)-hydroxamate import. Responsible for the translocation of the substrate across the membrane. The polypeptide is Iron(3+)-hydroxamate import system permease protein FhuB (fhuB) (Bacillus subtilis (strain 168)).